A 311-amino-acid polypeptide reads, in one-letter code: Cathepsin B (311 aa).

Positions 1-19 (MRVLLSLVVILFIINSAFA) are cleaved as a signal peptide. Residues 20–78 (VKINIGRPTKSHKTIHHETWVEEQTDQFDNIKVGQLLGFKRSPNRPKLQIKSYDPLGVQ) constitute a propeptide that is removed on maturation. An N-linked (GlcNAc...) asparagine glycan is attached at Asn91. 5 cysteine pairs are disulfide-bonded: Cys92–Cys121, Cys104–Cys145, Cys138–Cys191, Cys167–Cys195, and Cys175–Cys182. Cys107 is an active-site residue. Asn198 is a glycosylation site (N-linked (GlcNAc...) asparagine). Residues His261 and Asn281 contribute to the active site. N-linked (GlcNAc...) asparagine glycosylation is present at Asn290.

The protein belongs to the peptidase C1 family.

The protein localises to the lysosome. It carries out the reaction Hydrolysis of proteins with broad specificity for peptide bonds. Preferentially cleaves -Arg-Arg-|-Xaa bonds in small molecule substrates (thus differing from cathepsin L). In addition to being an endopeptidase, shows peptidyl-dipeptidase activity, liberating C-terminal dipeptides.. In terms of biological role, thiol protease which is believed to participate in intracellular degradation and turnover of proteins. The chain is Cathepsin B (ctsB) from Dictyostelium discoideum (Social amoeba).